The sequence spans 533 residues: Tryptophan 7-halogenase KtzQ (533 aa).

Residues glycine 14, threonine 16, alanine 17, alanine 40, glutamate 50, and alanine 51 each coordinate FAD. Lysine 80 is a catalytic residue. Glutamate 359 contacts L-tryptophan. Residues threonine 361 and glycine 362 each contribute to the chloride site. Leucine 363 is a binding site for FAD. Residues tyrosine 456, tyrosine 457, glutamate 463, and phenylalanine 467 each coordinate L-tryptophan.

The protein belongs to the flavin-dependent halogenase family. Bacterial tryptophan halogenase subfamily.

It carries out the reaction L-tryptophan + FADH2 + chloride + O2 = 7-chloro-L-tryptophan + FAD + 2 H2O. Its function is as follows. Involved in the biosynthesis of kutznerides, actinomycete-derived antifungal and antimicrobial cyclic hexadepsipeptides. Together with KtzR, catalyzes the regiospecific dichlorination of L-tryptophan (L-Trp) to produce 6,7-dichloro-L-tryptophan. KtzQ catalyzes the chlorination of L-Trp at C7 position to yield 7-chlorotryptophan. Can also use 6-chloro-L-tryptophan as substrate and form 6,7-dichloro-L-tryptophan, but has a preference for halogenation at the 7 position of unmodified L-Trp. Cannot use piperazic acid or gamma,delta-dehydropiperazic acid. The protein is Tryptophan 7-halogenase KtzQ of Kutzneria sp. (strain 744).